A 550-amino-acid polypeptide reads, in one-letter code: ATP synthase subunit alpha (550 aa).

172–179 lines the ATP pocket; that stretch reads GDRKTGKT. Residues 514-550 are disordered; sequence EDEQRVNEPPAKPLAGEENRETVTRFRDGTTDRPAES. Residues 528–550 show a composition bias toward basic and acidic residues; sequence AGEENRETVTRFRDGTTDRPAES.

The protein belongs to the ATPase alpha/beta chains family. As to quaternary structure, F-type ATPases have 2 components, CF(1) - the catalytic core - and CF(0) - the membrane proton channel. CF(1) has five subunits: alpha(3), beta(3), gamma(1), delta(1), epsilon(1). CF(0) has three main subunits: a(1), b(2) and c(9-12). The alpha and beta chains form an alternating ring which encloses part of the gamma chain. CF(1) is attached to CF(0) by a central stalk formed by the gamma and epsilon chains, while a peripheral stalk is formed by the delta and b chains.

It is found in the cell membrane. The enzyme catalyses ATP + H2O + 4 H(+)(in) = ADP + phosphate + 5 H(+)(out). Produces ATP from ADP in the presence of a proton gradient across the membrane. The alpha chain is a regulatory subunit. This chain is ATP synthase subunit alpha, found in Salinispora arenicola (strain CNS-205).